The sequence spans 265 residues: Lysosomal membrane ascorbate-dependent ferrireductase CYB561A3 (265 aa).

Topologically, residues 1–2 (MA) are cytoplasmic. A helical membrane pass occupies residues 3–23 (VGWFYLSVLALCSLGSMCILF). The region spanning 12-219 (ALCSLGSMCI…FGLLVLYILL (208 aa)) is the Cytochrome b561 domain. Over 24–45 (TIYWMRYWHGGFAWDGSMLMFN) the chain is Lumenal. A helical transmembrane segment spans residues 46-66 (WHPVLMVTGMVVLYSAASLVY). 2 residues coordinate heme b: histidine 47 and arginine 67. Over 67–83 (RLPQSWVGPRLPWKSGH) the chain is Cytoplasmic. Positions 76 and 80 each coordinate L-ascorbate. Residue histidine 83 participates in heme b binding. A helical membrane pass occupies residues 84–104 (AAMHLLAFLLTVLGLHAVFEF). Over 105 to 119 (HNHAKIPHLYSLHSW) the chain is Lumenal. Residues 112–115 (HLYS) and histidine 117 contribute to the heme b site. Residues 120 to 140 (LGITTVFLFACQWFLGFSVFL) form a helical membrane-spanning segment. Residues 141 to 154 (LPWASMWLRSLLKP) lie on the Cytoplasmic side of the membrane. Arginine 149 is a binding site for L-ascorbate. The helical transmembrane segment at 155 to 175 (IHVFFGASILSLAIASVVSGI) threads the bilayer. Heme b contacts are provided by histidine 156 and glutamate 177. Residues 176–197 (NEKLFFSLKNGTKTYSNLPSEA) are Lumenal-facing. N-linked (GlcNAc...) asparagine glycosylation occurs at asparagine 185. The chain crosses the membrane as a helical span at residues 198–218 (VFANCAGMLVVVFGLLVLYIL). At 219-265 (LASSWKRPEPGMQAEREPTRTRGRAGTPEVMLEGERGLAEPLLQKRS) the chain is on the cytoplasmic side. Lysine 224 provides a ligand contact to heme b. Basic and acidic residues predominate over residues 228 to 238 (PGMQAEREPTR). A disordered region spans residues 228–265 (PGMQAEREPTRTRGRAGTPEVMLEGERGLAEPLLQKRS).

Homodimer. Requires heme b as cofactor. N-glycosylated.

Its subcellular location is the late endosome membrane. It localises to the lysosome membrane. It carries out the reaction Fe(3+)(out) + L-ascorbate(in) = monodehydro-L-ascorbate radical(in) + Fe(2+)(out) + H(+). Its function is as follows. Transmembrane reductase that uses ascorbate as an electron donor in the cytoplasm and transfers electrons across membranes to reduce iron cations Fe(3+) into Fe(2+) in the lumen of the late endosome and lysosome. Reduced iron can then be extruded from the late endosome and lysosome to the cytoplasm by divalent metal-specific transporters. It is therefore most probably involved in endosomal and lysosomal cellular iron homeostasis. This Bos taurus (Bovine) protein is Lysosomal membrane ascorbate-dependent ferrireductase CYB561A3.